The following is a 274-amino-acid chain: MPMSQANPRKRIALVIQYIGTHFCGWQRQTAERTVQAVIEETISTVVGQKITIHGAGRTDSGVHAAGQFAHFECESLIPGYKWAKILNDRLPPDINIRGACEVSQDWHAQFSAQWRRYRYTIYTHPTPNLFIQPYAWHYYQAPLDETLIQAALTPLLGEHHLAAFQRTGSKRSHAWVNVQAAECSRRGSFIHIEIQANGFLYGMVRLLVGMLVDIGQGKLSLAQFQDIWKNEKRHLVKYSAPAKGLCLLRVGYPEPLFPPHIWFDTQPTFLLTH.

The active-site Nucleophile is Asp-60. Tyr-118 serves as a coordination point for substrate.

It belongs to the tRNA pseudouridine synthase TruA family. Homodimer.

The enzyme catalyses uridine(38/39/40) in tRNA = pseudouridine(38/39/40) in tRNA. In terms of biological role, formation of pseudouridine at positions 38, 39 and 40 in the anticodon stem and loop of transfer RNAs. This chain is tRNA pseudouridine synthase A, found in Picosynechococcus sp. (strain ATCC 27264 / PCC 7002 / PR-6) (Agmenellum quadruplicatum).